A 211-amino-acid polypeptide reads, in one-letter code: uncharacterized protein (211 aa).

The disordered stretch occupies residues 1–43; that stretch reads MRPEVGREPAALQPRQRPRSDHQLHRSPFTVPPRTPACRSPGP.

This is an uncharacterized protein from Homo sapiens (Human).